Reading from the N-terminus, the 212-residue chain is Pyridoxine/pyridoxamine 5'-phosphate oxidase (212 aa).

Substrate-binding positions include 8-11 (RREY) and lysine 66. Residues 61 to 66 (RIVLLK), 76 to 77 (FT), arginine 82, lysine 83, and glutamine 105 each bind FMN. 3 residues coordinate substrate: tyrosine 123, arginine 127, and serine 131. FMN contacts are provided by residues 140 to 141 (QS) and tryptophan 185. 191-193 (RLH) contributes to the substrate binding site. An FMN-binding site is contributed by arginine 195.

It belongs to the pyridoxamine 5'-phosphate oxidase family. Homodimer. FMN is required as a cofactor.

It carries out the reaction pyridoxamine 5'-phosphate + O2 + H2O = pyridoxal 5'-phosphate + H2O2 + NH4(+). It catalyses the reaction pyridoxine 5'-phosphate + O2 = pyridoxal 5'-phosphate + H2O2. The protein operates within cofactor metabolism; pyridoxal 5'-phosphate salvage; pyridoxal 5'-phosphate from pyridoxamine 5'-phosphate: step 1/1. It functions in the pathway cofactor metabolism; pyridoxal 5'-phosphate salvage; pyridoxal 5'-phosphate from pyridoxine 5'-phosphate: step 1/1. Functionally, catalyzes the oxidation of either pyridoxine 5'-phosphate (PNP) or pyridoxamine 5'-phosphate (PMP) into pyridoxal 5'-phosphate (PLP). This Shewanella oneidensis (strain ATCC 700550 / JCM 31522 / CIP 106686 / LMG 19005 / NCIMB 14063 / MR-1) protein is Pyridoxine/pyridoxamine 5'-phosphate oxidase.